Consider the following 470-residue polypeptide: Tigger transposable element-derived protein 3 (470 aa).

The 53-residue stretch at leucine 3 to leucine 55 folds into the HTH psq-type domain. 2 consecutive DNA-binding regions (H-T-H motif) follow at residues glutamine 31–asparagine 51 and proline 100–arginine 130. The HTH CENPB-type domain maps to glutamate 67–threonine 137. In terms of domain architecture, DDE-1 spans phenylalanine 167–phenylalanine 360. Positions aspartate 402–glutamate 421 are enriched in basic and acidic residues. The segment at aspartate 402–proline 426 is disordered.

This sequence belongs to the tigger transposable element derived protein family.

Its subcellular location is the nucleus. This chain is Tigger transposable element-derived protein 3 (Tigd3), found in Mus musculus (Mouse).